The chain runs to 441 residues: MQQAAAPKISFVSLGCPKALVDSERIITRLRAEGYELARQHDGADLVIVNTCGFLDSAKQESLAAIGEAMAANGKVIVTGCMGAEPEQIEAAYPGVLSITGPQQYESVLDAVHRAKPALHNPHLDLVPEQGIRLTPRHYAYLKISEGCNNRCSFCIIPKLRGDLASRSAADVLREAEKLVAAGVKELLVISQDTSAYGVDLKYAESPWKDRSVRAKFIDLARELGELGAWVRLHYVYPYPHVDEVIGLMTEGKVLPYLDIPFQHASPDVLKLMKRPAAQDKTLERIKRWRAQCPDLALRSTFIVGFPGETERDFEFLLDWLDEAEIDRLGAFKYEPVAGAPSNALEGQVPDEVKQERWNRLMARQQAISARRLKRKVGTRQQIIIDEIGPTVAKGRSKADAPEIDGSVYLTSRRPLRVGEIVTAKIDRADAYDLHGTVAGF.

The 111-residue stretch at 7–117 folds into the MTTase N-terminal domain; that stretch reads PKISFVSLGC…VLDAVHRAKP (111 aa). The [4Fe-4S] cluster site is built by cysteine 16, cysteine 52, cysteine 81, cysteine 148, cysteine 152, and cysteine 155. Residues 134–371 enclose the Radical SAM core domain; the sequence is LTPRHYAYLK…MARQQAISAR (238 aa). Positions 374–440 constitute a TRAM domain; it reads KRKVGTRQQI…AYDLHGTVAG (67 aa).

Belongs to the methylthiotransferase family. RimO subfamily. [4Fe-4S] cluster is required as a cofactor.

The protein resides in the cytoplasm. The catalysed reaction is L-aspartate(89)-[ribosomal protein uS12]-hydrogen + (sulfur carrier)-SH + AH2 + 2 S-adenosyl-L-methionine = 3-methylsulfanyl-L-aspartate(89)-[ribosomal protein uS12]-hydrogen + (sulfur carrier)-H + 5'-deoxyadenosine + L-methionine + A + S-adenosyl-L-homocysteine + 2 H(+). Functionally, catalyzes the methylthiolation of an aspartic acid residue of ribosomal protein uS12. In Rhodopseudomonas palustris (strain HaA2), this protein is Ribosomal protein uS12 methylthiotransferase RimO.